The following is a 290-amino-acid chain: Pre-mRNA-splicing factor cwf20 (290 aa).

Disordered stretches follow at residues 1–61 (MSLV…KSSF) and 114–134 (PNNSVSDLTSTGSSETVKKST). Polar residues predominate over residues 114–128 (PNNSVSDLTSTGSSE).

In terms of assembly, belongs to the 40S cdc5-associated complex (or cwf complex), a spliceosome sub-complex reminiscent of a late-stage spliceosome composed of the U2, U5 and U6 snRNAs and at least brr2, cdc5, cwf2/prp3, cwf3/syf1, cwf4/syf3, cwf5/ecm2, spp42/cwf6, cwf7/spf27, cwf8, cwf9, cwf10, cwf11, cwf12, prp45/cwf13, cwf14, cwf15, cwf16, cwf17, cwf18, cwf19, cwf20, cwf21, cwf22, cwf23, cwf24, cwf25, cwf26, cyp7/cwf27, cwf28, cwf29/ist3, lea1, msl1, prp5/cwf1, prp10, prp12/sap130, prp17, prp22, sap61, sap62, sap114, sap145, slu7, smb1, smd1, smd3, smf1, smg1 and syf2.

It is found in the nucleus. Its function is as follows. Involved in mRNA splicing where it associates with cdc5 and the other cwf proteins as part of the spliceosome. This is Pre-mRNA-splicing factor cwf20 (cwf20) from Schizosaccharomyces pombe (strain 972 / ATCC 24843) (Fission yeast).